The sequence spans 117 residues: MDKKASRIRRATRARRKIAELGATRLVVHRTPRHVYAQVIAANGSEVIAAASTVEKAIREQVKYTGNIEAAKAVGKAVAERALEKGVSTVAFDRSGFQYHGRVAALADSAREAGLKF.

This sequence belongs to the universal ribosomal protein uL18 family. As to quaternary structure, part of the 50S ribosomal subunit; part of the 5S rRNA/L5/L18/L25 subcomplex. Contacts the 5S and 23S rRNAs.

Its function is as follows. This is one of the proteins that bind and probably mediate the attachment of the 5S RNA into the large ribosomal subunit, where it forms part of the central protuberance. This chain is Large ribosomal subunit protein uL18, found in Vibrio vulnificus (strain CMCP6).